Reading from the N-terminus, the 1043-residue chain is MTLLEGSVGVEDLVLLEPLEQESLIRNLQLRYEKKEIYTYIGNVLVSVNPYQQLPIYDLEFVAKYRDYTFYELKPHIYALANMAYQSLRDRDRDQCILITGESGAGKTEASKLVMSYVAAVCGKGEQVNSVKEQLLQSNPVLEAFGNAKTIRNNNSSRFGKYMDIEFDFKGFPLGGVITNYLLEKSRVVKQLEGERNFHIFYQLLAGADAQLLKALKLERDTGGYAYLNPDTSRVDGMDDDANFKVLQSAMTVIGFSDEEIRQVLEVAALVLKLGNVELINEFQANGVPASGIRDGRGVQEIGELVGLNSVELERALCSRTMETAKEKVVTTLNVIQAQYARDALAKNIYSRLFNWLVNRINESIKVGTGEKRKVMGVLDIYGFEILEDNSFEQFVINYCNEKLQQVFIEMTLKEEQEEYKREGIPWVKVEYFDNGIICNLIEHNQRGILAMLDEECLRPGVVSDSTFLAKLNQLFSKHSHYESKVTQNAQRQYDHSMGLSCFRICHYAGKVTYNVNSFIDKNNDLLFRDLSQAMWKARHPLLRSLFPEGDPKQASLKRPPTAGAQFKSSVTTLMKNLYSKNPNYIRCIKPNEHQQRGHFSFELVSVQAQYLGLLENVRVRRAGYAYRQAYGSFLERYRLLSRSTWPRWNGGDQEGVEKVLGELSMSSEELAFGKTKIFIRSPKTLFYLEEQRRLRLQQLATLIQKTYRGWRCRTHYQLMRKSQIVISSWFRGNMQKKHYRKMKASALLIQAFVRGWKARKNYRKYFRSGAALILSNFIYKSMVQKFLLGLKNDLPSPSILDKKWPSAPYKYFNTANHELQRLFHQWKCKKFRDQLSPKQVEVLREKLCASELFKGKKASYPQSVPIPFHGDYIGLQRNPKLQKLKGGEEGPILMAETVVKVNRGNAKTSSRILLLTKGHVIITDMKNPQAKTVIPLNSLAGVSVTSFKDGLFSLHLSEISSVGSKGEFLLVSEHVIELLTKICRATLDATQMQLPVTVTEEFSVKFKEGSLTVKVIQGPGGGGTGKLSFKKKGSRCLEVTVQ.

A Myosin motor domain is found at 8–694 (VGVEDLVLLE…TLFYLEEQRR (687 aa)). 101-108 (GESGAGKT) provides a ligand contact to ATP. An actin-binding region spans residues 571–593 (VTTLMKNLYSKNPNYIRCIKPNE). IQ domains follow at residues 697 to 719 (LQQL…HYQL), 720 to 742 (MRKS…HYRK), and 743 to 772 (MKAS…SGAA). The TH1 domain occupies 858 to 1042 (KASYPQSVPI…KGSRCLEVTV (185 aa)).

The protein belongs to the TRAFAC class myosin-kinesin ATPase superfamily. Myosin family. Phosphorylated by ALPK1.

Functionally, involved in directing the movement of organelles along actin filaments. The chain is Unconventional myosin-Ia (MYO1A) from Bos taurus (Bovine).